A 190-amino-acid polypeptide reads, in one-letter code: Surfactant protein C (190 aa).

Residues 1–24 constitute a propeptide that is removed on maturation; it reads MDVGSKEVLMESPPDYTAVPGGRL. Residues cysteine 28 and cysteine 29 are each lipidated (S-palmitoyl cysteine). A propeptide spanning residues 59–190 is cleaved from the precursor; that stretch reads HMSQKHTEMV…LCGEVPLYYT (132 aa). Residues 94 to 190 enclose the BRICHOS domain; it reads FSIGSTGTVV…LCGEVPLYYT (97 aa). Cysteine 121 and cysteine 182 are disulfide-bonded.

It is found in the secreted. The protein localises to the extracellular space. Its subcellular location is the surface film. Functionally, pulmonary surfactant associated proteins promote alveolar stability by lowering the surface tension at the air-liquid interface in the peripheral air spaces. The protein is Surfactant protein C (SFTPC) of Bos taurus (Bovine).